The following is a 519-amino-acid chain: Exodeoxyribonuclease 7 large subunit (519 aa).

This sequence belongs to the XseA family. Heterooligomer composed of large and small subunits.

The protein resides in the cytoplasm. The enzyme catalyses Exonucleolytic cleavage in either 5'- to 3'- or 3'- to 5'-direction to yield nucleoside 5'-phosphates.. Its function is as follows. Bidirectionally degrades single-stranded DNA into large acid-insoluble oligonucleotides, which are then degraded further into small acid-soluble oligonucleotides. The sequence is that of Exodeoxyribonuclease 7 large subunit from Cereibacter sphaeroides (strain ATCC 17025 / ATH 2.4.3) (Rhodobacter sphaeroides).